Reading from the N-terminus, the 189-residue chain is Probable DNA-directed RNA polymerase subunit delta (189 aa).

Positions 14-81 constitute an HTH HARE-type domain; the sequence is LSMIEVAHAI…GENVWALRTW (68 aa). Acidic residues-rich tracts occupy residues 90-100 and 118-189; these read EVDHPEDDGDE and EGDD…EDEE. A disordered region spans residues 90–189; that stretch reads EVDHPEDDGD…DDLDDDEDEE (100 aa).

This sequence belongs to the RpoE family. As to quaternary structure, RNAP is composed of a core of 2 alpha, a beta and a beta' subunits. The core is associated with a delta subunit and one of several sigma factors.

Its function is as follows. Participates in both the initiation and recycling phases of transcription. In the presence of the delta subunit, RNAP displays an increased specificity of transcription, a decreased affinity for nucleic acids, and an increased efficiency of RNA synthesis because of enhanced recycling. The sequence is that of Probable DNA-directed RNA polymerase subunit delta from Lactobacillus delbrueckii subsp. bulgaricus (strain ATCC BAA-365 / Lb-18).